The chain runs to 433 residues: MRNRTYTADAEPGDTVTVAGWVHEVRDLGGIAFLILRDTSGKIQVKFEKDEMDDDLVETGLGVHRESVISVTGEVDEEPRAPTGVEVTPESLDVIAEAEAQLPLDPSGKVDAELSTRLDNRTLDLRKDEVKAIFEIRAEVQRAVRDKFRDLRATEINTPKIVATGTEGGTELFPITYFGQEAFMNQSPQLFKQLMVGSGLERVFEVGPIFRAEEHNTPRHLNEATSIDFESAFIDHTEAMDVCEAVVTAAYEAVEENCQDELEALGLEEEFERRPRVPAAHLRGGHRAHQRTGELDEQLVWGDDLPTEGEKALGEDVGEHYFITDWPSEIKPFYIKDHDDDETLSTGFDMMHPNMELVSGGQREHRFDHLVAGFEQQGLDPDAFEYYTKMFKYGMPPHAGFGLGGERLIMTMLGLENIREAVLFPRDRQRLSP.

E167 serves as a coordination point for L-aspartate. Residues 189–192 (QLFK) form an aspartate region. An L-aspartate-binding site is contributed by R211. ATP-binding positions include 211–213 (RAE), 219–221 (RHL), and E356. E356 and S359 together coordinate Mg(2+). L-aspartate is bound by residues S359 and R363. Residue 404-407 (GGER) coordinates ATP.

The protein belongs to the class-II aminoacyl-tRNA synthetase family. Type 2 subfamily. Homodimer. Requires Mg(2+) as cofactor.

It is found in the cytoplasm. The enzyme catalyses tRNA(Asx) + L-aspartate + ATP = L-aspartyl-tRNA(Asx) + AMP + diphosphate. Aspartyl-tRNA synthetase with relaxed tRNA specificity since it is able to aspartylate not only its cognate tRNA(Asp) but also tRNA(Asn). Reaction proceeds in two steps: L-aspartate is first activated by ATP to form Asp-AMP and then transferred to the acceptor end of tRNA(Asp/Asn). In Haloferax volcanii (Halobacterium volcanii), this protein is Aspartate--tRNA(Asp/Asn) ligase.